A 235-amino-acid polypeptide reads, in one-letter code: ATP phosphoribosyltransferase (235 aa).

Belongs to the ATP phosphoribosyltransferase family. Short subfamily. In terms of assembly, heteromultimer composed of HisG and HisZ subunits.

Its subcellular location is the cytoplasm. It carries out the reaction 1-(5-phospho-beta-D-ribosyl)-ATP + diphosphate = 5-phospho-alpha-D-ribose 1-diphosphate + ATP. It participates in amino-acid biosynthesis; L-histidine biosynthesis; L-histidine from 5-phospho-alpha-D-ribose 1-diphosphate: step 1/9. In terms of biological role, catalyzes the condensation of ATP and 5-phosphoribose 1-diphosphate to form N'-(5'-phosphoribosyl)-ATP (PR-ATP). Has a crucial role in the pathway because the rate of histidine biosynthesis seems to be controlled primarily by regulation of HisG enzymatic activity. This Synechococcus sp. (strain JA-2-3B'a(2-13)) (Cyanobacteria bacterium Yellowstone B-Prime) protein is ATP phosphoribosyltransferase.